The primary structure comprises 315 residues: Thioredoxin reductase (315 aa).

45–52 (EGNTPGGK) contributes to the FAD binding site. Residues Cys145 and Cys148 are joined by a disulfide bond. FAD is bound at residue 288–297 (DCRSKSFRQI).

The protein belongs to the class-II pyridine nucleotide-disulfide oxidoreductase family. In terms of assembly, homodimer. The cofactor is FAD.

Its subcellular location is the cytoplasm. It catalyses the reaction [thioredoxin]-dithiol + NADP(+) = [thioredoxin]-disulfide + NADPH + H(+). This Mycoplasma genitalium (strain ATCC 33530 / DSM 19775 / NCTC 10195 / G37) (Mycoplasmoides genitalium) protein is Thioredoxin reductase (trxB).